Consider the following 191-residue polypeptide: Protein Ves (191 aa).

It belongs to the Ves family.

The protein is Protein Ves of Shigella flexneri.